Reading from the N-terminus, the 251-residue chain is 4-hydroxy-tetrahydrodipicolinate reductase (251 aa).

Residues 9 to 14 (GCNGKM), 85 to 87 (ATT), and 109 to 112 (SANM) each bind NAD(+). His-141 (proton donor/acceptor) is an active-site residue. His-142 provides a ligand contact to (S)-2,3,4,5-tetrahydrodipicolinate. The active-site Proton donor is the Lys-145. 151 to 152 (GT) is a binding site for (S)-2,3,4,5-tetrahydrodipicolinate.

Belongs to the DapB family.

The protein resides in the cytoplasm. The catalysed reaction is (S)-2,3,4,5-tetrahydrodipicolinate + NAD(+) + H2O = (2S,4S)-4-hydroxy-2,3,4,5-tetrahydrodipicolinate + NADH + H(+). It carries out the reaction (S)-2,3,4,5-tetrahydrodipicolinate + NADP(+) + H2O = (2S,4S)-4-hydroxy-2,3,4,5-tetrahydrodipicolinate + NADPH + H(+). The protein operates within amino-acid biosynthesis; L-lysine biosynthesis via DAP pathway; (S)-tetrahydrodipicolinate from L-aspartate: step 4/4. Functionally, catalyzes the conversion of 4-hydroxy-tetrahydrodipicolinate (HTPA) to tetrahydrodipicolinate. This is 4-hydroxy-tetrahydrodipicolinate reductase from Caldanaerobacter subterraneus subsp. tengcongensis (strain DSM 15242 / JCM 11007 / NBRC 100824 / MB4) (Thermoanaerobacter tengcongensis).